Here is a 210-residue protein sequence, read N- to C-terminus: Protein DrgA (210 aa).

This sequence belongs to the nitroreductase family. The cofactor is FMN.

Its function is as follows. Controls resistance to the herbicide Dinoseb and metronidazole. Involved in detoxification of Dinoseb via the reduction of the nitro group(s) and this process is accompanied by the formation of toxic superoxide anions. The polypeptide is Protein DrgA (drgA) (Synechocystis sp. (strain ATCC 27184 / PCC 6803 / Kazusa)).